We begin with the raw amino-acid sequence, 230 residues long: 2-C-methyl-D-erythritol 4-phosphate cytidylyltransferase (230 aa).

Belongs to the IspD/TarI cytidylyltransferase family. IspD subfamily.

It carries out the reaction 2-C-methyl-D-erythritol 4-phosphate + CTP + H(+) = 4-CDP-2-C-methyl-D-erythritol + diphosphate. It functions in the pathway isoprenoid biosynthesis; isopentenyl diphosphate biosynthesis via DXP pathway; isopentenyl diphosphate from 1-deoxy-D-xylulose 5-phosphate: step 2/6. Catalyzes the formation of 4-diphosphocytidyl-2-C-methyl-D-erythritol from CTP and 2-C-methyl-D-erythritol 4-phosphate (MEP). The polypeptide is 2-C-methyl-D-erythritol 4-phosphate cytidylyltransferase (Laribacter hongkongensis (strain HLHK9)).